Consider the following 256-residue polypeptide: Type III pantothenate kinase (256 aa).

Position 6–13 (6–13) interacts with ATP; the sequence is DVGNSHIY. Residues Tyr-99 and 106 to 109 contribute to the substrate site; that span reads GADR. Asp-108 serves as the catalytic Proton acceptor. Asp-129 serves as a coordination point for K(+). Thr-132 serves as a coordination point for ATP. Residue Thr-184 coordinates substrate.

It belongs to the type III pantothenate kinase family. As to quaternary structure, homodimer. NH4(+) serves as cofactor. The cofactor is K(+).

It is found in the cytoplasm. It carries out the reaction (R)-pantothenate + ATP = (R)-4'-phosphopantothenate + ADP + H(+). Its pathway is cofactor biosynthesis; coenzyme A biosynthesis; CoA from (R)-pantothenate: step 1/5. Functionally, catalyzes the phosphorylation of pantothenate (Pan), the first step in CoA biosynthesis. The polypeptide is Type III pantothenate kinase (Legionella pneumophila (strain Corby)).